The following is a 147-amino-acid chain: Ribosome-binding factor A (147 aa).

The tract at residues 126-147 (LKKNAQPAGDAHPYKDDDAMND) is disordered. Basic and acidic residues predominate over residues 137–147 (HPYKDDDAMND).

This sequence belongs to the RbfA family. Monomer. Binds 30S ribosomal subunits, but not 50S ribosomal subunits or 70S ribosomes.

The protein resides in the cytoplasm. Its function is as follows. One of several proteins that assist in the late maturation steps of the functional core of the 30S ribosomal subunit. Associates with free 30S ribosomal subunits (but not with 30S subunits that are part of 70S ribosomes or polysomes). Required for efficient processing of 16S rRNA. May interact with the 5'-terminal helix region of 16S rRNA. The sequence is that of Ribosome-binding factor A from Corynebacterium diphtheriae (strain ATCC 700971 / NCTC 13129 / Biotype gravis).